Reading from the N-terminus, the 295-residue chain is MTENIRQIAFYGKGGIGKSTTSQNTLAAMAEMGQRIMIVGCDPKADSTRLMLHSKAQTTVLHLAAERGAVEDLELEEVMLTGFRGVKCVESGGPEPGVGCAGRGIITAINFLEENGAYQDLDFVSYDVLGDVVCGGFAMPIREGKAQEIYIVTSGEMMAMYAANNIARGILKYAHSGGVRLGGLICNSRKVDREAELIENLAERLNTQMIHFVPRDNIVQHAELRRMTVNEYAPDSNQSQEYRALAKKIINNTKLTIPTPMEMDELEALLIEYGILDDDTKHADIIGKPAEASAK.

Position 12–19 (12–19 (GKGGIGKS)) interacts with ATP. Cys-100 contacts [4Fe-4S] cluster. Arg-103 is subject to ADP-ribosylarginine; by dinitrogenase reductase ADP-ribosyltransferase. Cys-134 contributes to the [4Fe-4S] cluster binding site.

Belongs to the NifH/BchL/ChlL family. In terms of assembly, homodimer. [4Fe-4S] cluster is required as a cofactor. The reversible ADP-ribosylation of Arg-103 inactivates the nitrogenase reductase and regulates nitrogenase activity.

It carries out the reaction N2 + 8 reduced [2Fe-2S]-[ferredoxin] + 16 ATP + 16 H2O = H2 + 8 oxidized [2Fe-2S]-[ferredoxin] + 2 NH4(+) + 16 ADP + 16 phosphate + 6 H(+). Functionally, the key enzymatic reactions in nitrogen fixation are catalyzed by the nitrogenase complex, which has 2 components: the iron protein and the molybdenum-iron protein. The sequence is that of Nitrogenase iron protein 1 (nifH1) from Mastigocladus laminosus (Fischerella sp.).